The chain runs to 485 residues: Rhamnulokinase (485 aa).

Position 8 to 12 (8 to 12 (ASSGR)) interacts with ATP. Substrate is bound by residues Gly78 and 231 to 233 (HDT). The Proton acceptor role is filled by Asp232. Residue Thr254 coordinates ATP. Asn291 lines the substrate pocket. An ATP-binding site is contributed by Gln299. An intrachain disulfide couples Cys348 to Cys365. Gly397 provides a ligand contact to ATP. A disulfide bridge connects residues Cys408 and Cys412.

This sequence belongs to the rhamnulokinase family. Mg(2+) serves as cofactor.

It catalyses the reaction L-rhamnulose + ATP = L-rhamnulose 1-phosphate + ADP + H(+). The protein operates within carbohydrate degradation; L-rhamnose degradation; glycerone phosphate from L-rhamnose: step 2/3. Its function is as follows. Involved in the catabolism of L-rhamnose (6-deoxy-L-mannose). Catalyzes the transfer of the gamma-phosphate group from ATP to the 1-hydroxyl group of L-rhamnulose to yield L-rhamnulose 1-phosphate. The sequence is that of Rhamnulokinase from Yersinia pestis bv. Antiqua (strain Antiqua).